We begin with the raw amino-acid sequence, 195 residues long: Meiotically up-regulated gene 84 protein (195 aa).

Residues 1–84 (MTLTHHSTFI…IMVKVPTYEY (84 aa)) are Cytoplasmic-facing. Residues 85-105 (YGFVMYLVSMLGFGVYIVWAL) form a helical membrane-spanning segment. Over 106–122 (TPAPVLKFFEIHYYLSR) the chain is Lumenal. A helical transmembrane segment spans residues 123 to 143 (WWALAIPTWLFVLVIYIHVVL). Residues 144-195 (NAYNTEVLTKPFSSLECIVDQYALVGEEDGAAHGRVVDLRLCDVNKQQLEET) lie on the Cytoplasmic side of the membrane.

The protein localises to the endoplasmic reticulum membrane. Has a role in meiosis. This is Meiotically up-regulated gene 84 protein (mug84) from Schizosaccharomyces pombe (strain 972 / ATCC 24843) (Fission yeast).